Consider the following 481-residue polypeptide: Adenosylhomocysteinase (481 aa).

Substrate contacts are provided by Thr-65, Asp-140, and Glu-200. NAD(+) is bound at residue 201-203 (TTT). Residues Lys-230 and Asp-234 each coordinate substrate. NAD(+) contacts are provided by residues Asn-235, 264-269 (GYGDVG), Glu-287, Asn-322, 343-345 (IGH), and Asn-393.

Belongs to the adenosylhomocysteinase family. The cofactor is NAD(+).

Its subcellular location is the cytoplasm. The catalysed reaction is S-adenosyl-L-homocysteine + H2O = L-homocysteine + adenosine. It participates in amino-acid biosynthesis; L-homocysteine biosynthesis; L-homocysteine from S-adenosyl-L-homocysteine: step 1/1. Its function is as follows. May play a key role in the regulation of the intracellular concentration of adenosylhomocysteine. This chain is Adenosylhomocysteinase, found in Polynucleobacter asymbioticus (strain DSM 18221 / CIP 109841 / QLW-P1DMWA-1) (Polynucleobacter necessarius subsp. asymbioticus).